A 372-amino-acid polypeptide reads, in one-letter code: tRNA pseudouridine synthase D (372 aa).

Catalysis depends on Asp85, which acts as the Nucleophile. The TRUD domain maps to 160–330 (GFANYFGYQR…MQGSRRFMWG (171 aa)).

Belongs to the pseudouridine synthase TruD family.

It catalyses the reaction uridine(13) in tRNA = pseudouridine(13) in tRNA. Responsible for synthesis of pseudouridine from uracil-13 in transfer RNAs. The chain is tRNA pseudouridine synthase D from Campylobacter jejuni subsp. jejuni serotype O:2 (strain ATCC 700819 / NCTC 11168).